The sequence spans 373 residues: tRNA-specific 2-thiouridylase MnmA (373 aa).

Residues 12-19 (GMSGGVDS) and M38 each bind ATP. Residues 98 to 100 (NPD) form an interaction with target base in tRNA region. C103 (nucleophile) is an active-site residue. A disulfide bridge links C103 with C200. Residue G127 coordinates ATP. The interaction with tRNA stretch occupies residues 150-152 (KDQ). C200 (cysteine persulfide intermediate) is an active-site residue. The interaction with tRNA stretch occupies residues 312 to 313 (RY).

The protein belongs to the MnmA/TRMU family.

The protein localises to the cytoplasm. The enzyme catalyses S-sulfanyl-L-cysteinyl-[protein] + uridine(34) in tRNA + AH2 + ATP = 2-thiouridine(34) in tRNA + L-cysteinyl-[protein] + A + AMP + diphosphate + H(+). Functionally, catalyzes the 2-thiolation of uridine at the wobble position (U34) of tRNA, leading to the formation of s(2)U34. The polypeptide is tRNA-specific 2-thiouridylase MnmA (Streptococcus pyogenes serotype M18 (strain MGAS8232)).